The sequence spans 612 residues: Phosphomethylpyrimidine synthase (612 aa).

Disordered stretches follow at residues 1-33 (MTIKDARTPASTQNTAQADTAENTDTAEDTEAG) and 105-146 (AGRP…RDGN). Residues 12 to 24 (TQNTAQADTAENT) show a composition bias toward low complexity. The segment covering 105-117 (AGRPVRPEDDGIK) has biased composition (basic and acidic residues). Substrate-binding positions include Asn-213, Met-242, Tyr-271, His-307, 327 to 329 (SRG), 368 to 371 (DGLR), and Glu-407. His-411 is a binding site for Zn(2+). A substrate-binding site is contributed by Tyr-434. His-475 is a binding site for Zn(2+). Positions 555, 558, and 563 each coordinate [4Fe-4S] cluster.

This sequence belongs to the ThiC family. The cofactor is [4Fe-4S] cluster.

It carries out the reaction 5-amino-1-(5-phospho-beta-D-ribosyl)imidazole + S-adenosyl-L-methionine = 4-amino-2-methyl-5-(phosphooxymethyl)pyrimidine + CO + 5'-deoxyadenosine + formate + L-methionine + 3 H(+). The protein operates within cofactor biosynthesis; thiamine diphosphate biosynthesis. Its function is as follows. Catalyzes the synthesis of the hydroxymethylpyrimidine phosphate (HMP-P) moiety of thiamine from aminoimidazole ribotide (AIR) in a radical S-adenosyl-L-methionine (SAM)-dependent reaction. This chain is Phosphomethylpyrimidine synthase, found in Streptomyces coelicolor (strain ATCC BAA-471 / A3(2) / M145).